A 632-amino-acid polypeptide reads, in one-letter code: Arginyl-tRNA--protein transferase 1 (632 aa).

Residues 1 to 18 (MSLKNDASSSHDGGSNRE) show a composition bias toward polar residues. Disordered stretches follow at residues 1–27 (MSLK…HGRR), 113–144 (KLDV…AKSE), 284–312 (NGNI…HQAR), and 517–580 (PAAS…NDIN). Positions 113–122 (KLDVQPREQR) are enriched in basic and acidic residues. Positions 285–296 (GNISRGANSLDG) are enriched in polar residues. Residues 298–310 (ETLHAKKDSENHQ) show a composition bias toward basic and acidic residues. Acidic residues predominate over residues 538-563 (SDEDEDEDEDDDDDDDDDEEMYETES). Positions 564 to 578 (EDSHIESDPGSKDND) are enriched in basic and acidic residues.

This sequence belongs to the R-transferase family.

The catalysed reaction is an N-terminal L-alpha-aminoacyl-[protein] + L-arginyl-tRNA(Arg) = an N-terminal L-arginyl-L-aminoacyl-[protein] + tRNA(Arg) + H(+). Functionally, involved in the post-translational conjugation of arginine to the N-terminal aspartate or glutamate of a protein. This arginylation is required for degradation of the protein via the ubiquitin pathway. Component of the N-end rule pathway with ATE2 and PRT6. The N-end rule pathway regulates seed after-ripening, seedling sugar sensitivity, seedling lipid breakdown, and abscisic acid (ABA) sensitivity of germination. The end-rule pathway regulates various aspects of leaf and shoot development. Involved in the oxygen-dependent N-arginylation of RAP2-12, an activator of hypoxic gene expression. This N-terminal modification leads to ubiquitination by PRT6 and subsequent degradation of RAP2-12 under aerobic conditions. Has an important role in the progression of leaf senescence. Involved in disease resistance. The end-rule pathway plays a role in regulating the timing and amplitude of the immune response following infection with the bacterial pathogen Pseudomonas syringae pv tomato. Regulates the biosynthesis of plant-defense metabolites such as glucosinolates, and the biosynthesis and response to the phytohormone jasmonate (JA), which plays a key role in plant immunity. The polypeptide is Arginyl-tRNA--protein transferase 1 (Arabidopsis thaliana (Mouse-ear cress)).